The following is an 867-amino-acid chain: Ent-copalyl diphosphate synthase 1, chloroplastic (867 aa).

The N-terminal 35 residues, methionine 1–arginine 35, are a transit peptide targeting the chloroplast. The tract at residues methionine 1–glutamine 134 is disordered. The segment covering arginine 51 to aspartate 64 has biased composition (basic and acidic residues). Over residues alanine 74–serine 89 the composition is skewed to low complexity. Over residues isoleucine 99 to glutamine 121 the composition is skewed to basic and acidic residues. Residues glutamate 124–leucine 133 show a composition bias toward acidic residues. Substrate is bound at residue lysine 286. The short motif at glutamate 418–aspartate 421 is the DXDD motif element. Lysine 504 contributes to the substrate binding site.

The protein belongs to the terpene synthase family. The cofactor is Mg(2+).

The protein localises to the plastid. The protein resides in the chloroplast. It carries out the reaction (2E,6E,10E)-geranylgeranyl diphosphate = ent-copalyl diphosphate. Its pathway is plant hormone biosynthesis; gibberellin biosynthesis. In terms of biological role, catalyzes the conversion of geranylgeranyl diphosphate to the gibberellin precursor ent-copalyl diphosphate. The protein is Ent-copalyl diphosphate synthase 1, chloroplastic (CPS1) of Oryza sativa subsp. japonica (Rice).